A 30-amino-acid polypeptide reads, in one-letter code: Cytochrome b6/f complex 12.6 kDa peptide (30 aa).

The interval 1–30 (SGSGVRSAKKGGKAQGGQAGVGYKGSTEPG) is disordered. The segment covering 13–23 (KAQGGQAGVGY) has biased composition (gly residues).

The protein localises to the plastid. It is found in the chloroplast. May be a component of the cytochrome b6/f complex which is part of the photosynthetic respiratory chain. The sequence is that of Cytochrome b6/f complex 12.6 kDa peptide from Euglena gracilis.